The sequence spans 429 residues: MSRSSDLFHKAQTIIPGGVNSPVRAFKGVGGEPVFFKSGKGAYLTDVDDKQYIDYVGSWGPLILGHCHPKVIEAVDNVLHSGMSFGAPTELEIQLAEKIASLMPSIEKIRMVNSGTEATMTAIRLARGFTNKNKFIKFNGCYHGHSDSLLVKAGSGLLTLGIPSTPGIPQSITEHTLTADFNNLEQVAQLFEKYPNDIATVILEPVPGNMGFILPKIEFLKGLRELCDQYNALLIFDEVMTGFRVGLHGAQGLFGIKPDITTLGKIIGGGMPVGALGGKREIMSFLAPEGPVYQAGTLSGNPLAMAAGLATLKEIEKINFFEDLSNATNKLTEALADAAENANIPFFAASLGGMFGFCFTDKNSVENYLDVASSDEVLFKKFFHAMLAQGVYFAPSMYEAGFVSSMHGDLEIQKTYDAAELVLNQLKSA.

The residue at position 265 (Lys265) is an N6-(pyridoxal phosphate)lysine.

It belongs to the class-III pyridoxal-phosphate-dependent aminotransferase family. HemL subfamily. In terms of assembly, homodimer. It depends on pyridoxal 5'-phosphate as a cofactor.

Its subcellular location is the cytoplasm. It catalyses the reaction (S)-4-amino-5-oxopentanoate = 5-aminolevulinate. It functions in the pathway porphyrin-containing compound metabolism; protoporphyrin-IX biosynthesis; 5-aminolevulinate from L-glutamyl-tRNA(Glu): step 2/2. The polypeptide is Glutamate-1-semialdehyde 2,1-aminomutase (Legionella pneumophila (strain Corby)).